Here is a 132-residue protein sequence, read N- to C-terminus: Small ribosomal subunit protein uS8 (132 aa).

The protein belongs to the universal ribosomal protein uS8 family. Part of the 30S ribosomal subunit. Contacts proteins S5 and S12.

Functionally, one of the primary rRNA binding proteins, it binds directly to 16S rRNA central domain where it helps coordinate assembly of the platform of the 30S subunit. This Psychrobacter cryohalolentis (strain ATCC BAA-1226 / DSM 17306 / VKM B-2378 / K5) protein is Small ribosomal subunit protein uS8.